The primary structure comprises 496 residues: Probable cytosol aminopeptidase (496 aa).

Mn(2+) contacts are provided by K267 and D272. K279 is a catalytic residue. Residues D290, D349, and E351 each contribute to the Mn(2+) site. R353 is an active-site residue.

This sequence belongs to the peptidase M17 family. The cofactor is Mn(2+).

The protein resides in the cytoplasm. It catalyses the reaction Release of an N-terminal amino acid, Xaa-|-Yaa-, in which Xaa is preferably Leu, but may be other amino acids including Pro although not Arg or Lys, and Yaa may be Pro. Amino acid amides and methyl esters are also readily hydrolyzed, but rates on arylamides are exceedingly low.. The catalysed reaction is Release of an N-terminal amino acid, preferentially leucine, but not glutamic or aspartic acids.. Presumably involved in the processing and regular turnover of intracellular proteins. Catalyzes the removal of unsubstituted N-terminal amino acids from various peptides. The sequence is that of Probable cytosol aminopeptidase from Methylobacillus flagellatus (strain ATCC 51484 / DSM 6875 / VKM B-1610 / KT).